The sequence spans 196 residues: MKILLINGAQEFAHSQGKFNKTLHNVAKDTLIQLGHTVQETVVDEGYDENTEVEKILWANVIIYQWPGWWMGTPWKLKRYMDEVFTAGYGQLYANDGRSSKNPTQNYGKGGLLHEHRYMISCTWNAPAAAFEEVGNFFDGRGVDGTLLTFHKANQFLGMKPLPTFMVNDVIKNPKVDIAVCAYKDHLNDVFGSANA.

FAD-binding positions include 15–22 (SQGKFNKT), 68–71 (GWWM), tyrosine 107, and 123–126 (TWNA).

It belongs to the oxidoreductase MdaB family. It depends on FAD as a cofactor.

This is an uncharacterized protein from Schizosaccharomyces pombe (strain 972 / ATCC 24843) (Fission yeast).